The chain runs to 469 residues: Ribonuclease Y (469 aa).

A helical membrane pass occupies residues 6-26; sequence VTLILVGVIIFLFISLFFYVI. One can recognise a KH domain in the interval 149–209; that stretch reads FSFTIKLENE…IRREKAKRTM (61 aa). One can recognise an HD domain in the interval 276–369; it reads VLLHCVEAAV…VKVVDKLSAS (94 aa).

The protein belongs to the RNase Y family.

The protein localises to the cell membrane. Its function is as follows. Endoribonuclease that initiates mRNA decay. The protein is Ribonuclease Y of Malacoplasma penetrans (strain HF-2) (Mycoplasma penetrans).